We begin with the raw amino-acid sequence, 346 residues long: Tetraacyldisaccharide 4'-kinase (346 aa).

54-61 (TVGGAGKT) provides a ligand contact to ATP.

Belongs to the LpxK family.

The catalysed reaction is a lipid A disaccharide + ATP = a lipid IVA + ADP + H(+). It participates in glycolipid biosynthesis; lipid IV(A) biosynthesis; lipid IV(A) from (3R)-3-hydroxytetradecanoyl-[acyl-carrier-protein] and UDP-N-acetyl-alpha-D-glucosamine: step 6/6. Functionally, transfers the gamma-phosphate of ATP to the 4'-position of a tetraacyldisaccharide 1-phosphate intermediate (termed DS-1-P) to form tetraacyldisaccharide 1,4'-bis-phosphate (lipid IVA). The protein is Tetraacyldisaccharide 4'-kinase of Rhizobium meliloti (strain 1021) (Ensifer meliloti).